We begin with the raw amino-acid sequence, 316 residues long: Ribosomal RNA large subunit methyltransferase F (316 aa).

It belongs to the methyltransferase superfamily. METTL16/RlmF family.

The protein resides in the cytoplasm. It catalyses the reaction adenosine(1618) in 23S rRNA + S-adenosyl-L-methionine = N(6)-methyladenosine(1618) in 23S rRNA + S-adenosyl-L-homocysteine + H(+). Specifically methylates the adenine in position 1618 of 23S rRNA. The chain is Ribosomal RNA large subunit methyltransferase F from Pseudomonas putida (strain W619).